An 840-amino-acid polypeptide reads, in one-letter code: V-type proton ATPase subunit a, vacuolar isoform (840 aa).

Position 2 is an N-acetylalanine (Ala-2). At 2–404 the chain is on the cytoplasmic side; it reads AEKEEAIFRS…DCYGIAQYRE (403 aa). Residues 117–145 adopt a coiled-coil conformation; the sequence is LEERLIQMEDATDQIEVQKNDLEQYRFIL. A helical membrane pass occupies residues 405–423; sequence INAGLPTIVTFPFMFAIMF. Topologically, residues 424-425 are vacuolar; that stretch reads GD. Residues 426-442 form a helical membrane-spanning segment; that stretch reads MGHGFLMTLAALSLVLN. The Cytoplasmic portion of the chain corresponds to 443 to 456; it reads EKKINKMKRGEIFD. The chain crosses the membrane as a helical span at residues 457–486; it reads MAFTGRYIILLMGVFSMYTGFLYNDIFSKT. The Vacuolar segment spans residues 487 to 534; sequence MTIFKSGWKWPDHWKKGESITATSVGTYPIGLDWAWHGTENALLFSNS. Residues 535-554 traverse the membrane as a helical segment; it reads YKMKLSILMGFIHMTYSYFF. At 555–572 the chain is on the cytoplasmic side; it reads SLANHLYFNSMIDIIGNF. The chain crosses the membrane as a helical span at residues 573-593; that stretch reads IPGLLFMQGIFGYLSVCIVYK. The Vacuolar portion of the chain corresponds to 594 to 636; the sequence is WAVDWVKDGKPAPGLLNMLINMFLSPGTIDDELYPHQAKVQVF. A helical transmembrane segment spans residues 637-656; that stretch reads LLLMALVCIPWLLLVKPLHF. Residues 657–719 lie on the Cytoplasmic side of the membrane; that stretch reads KFTHKKKSHE…DIMIHQVIHT (63 aa). The chain crosses the membrane as a helical span at residues 720–744; sequence IEFCLNCVSHTASYLRLWALSLAHA. Residues 745–765 are Vacuolar-facing; that stretch reads QLSSVLWTMTIQIAFGFRGFV. Residues 766 to 804 traverse the membrane as a helical segment; that stretch reads GVFMTVALFAMWFALTCAVLVLMEGTSAMLHSLRLHWVE. The Cytoplasmic segment spans residues 805 to 840; the sequence is SMSKFFVGEGLPYEPFAFEYKDMEVAVASASSSASS.

The protein belongs to the V-ATPase 116 kDa subunit family. V-ATPase is a heteromultimeric enzyme composed of a peripheral catalytic V1 complex (components A to H) attached to an integral membrane V0 proton pore complex (components: a, c, c', c'', d, e, f and VOA1). Glycosylated.

Its subcellular location is the vacuole membrane. In terms of biological role, subunit of the V0 complex of vacuolar(H+)-ATPase (V-ATPase), a multisubunit enzyme composed of a peripheral complex (V1) that hydrolyzes ATP and a membrane integral complex (V0) that translocates protons. V-ATPase is responsible for acidifying and maintaining the pH of intracellular compartments. Is present only in vacuolar V-ATPase complexes; enzymes containing this subunit have a 4-fold higher ratio of proton transport to ATP hydrolysis than complexes containing the Golgi/endosomal isoform and undergo reversible dissociation of V1 and V0 in response to glucose depletion. The chain is V-type proton ATPase subunit a, vacuolar isoform from Saccharomyces cerevisiae (strain ATCC 204508 / S288c) (Baker's yeast).